The chain runs to 170 residues: MKIKILFFLALPFLAYASEHGGTNYDIVERTLNFLLFFAILVYFAAKPLKALYQSRIDRIANKLESIQEKLRESKAKKDDVLKRVEEAKQNANALIETAKKEAVNLAAKVKKEAQNDIANIEKGYKEQKEFEERKMTKGVVNEILSDIFSSDSLKVDQKELVNIILKKVS.

The helical transmembrane segment at 3–23 (IKILFFLALPFLAYASEHGGT) threads the bilayer.

Belongs to the ATPase B chain family. F-type ATPases have 2 components, F(1) - the catalytic core - and F(0) - the membrane proton channel. F(1) has five subunits: alpha(3), beta(3), gamma(1), delta(1), epsilon(1). F(0) has three main subunits: a(1), b(2) and c(10-14). The alpha and beta chains form an alternating ring which encloses part of the gamma chain. F(1) is attached to F(0) by a central stalk formed by the gamma and epsilon chains, while a peripheral stalk is formed by the delta and b chains.

It localises to the cell inner membrane. Functionally, f(1)F(0) ATP synthase produces ATP from ADP in the presence of a proton or sodium gradient. F-type ATPases consist of two structural domains, F(1) containing the extramembraneous catalytic core and F(0) containing the membrane proton channel, linked together by a central stalk and a peripheral stalk. During catalysis, ATP synthesis in the catalytic domain of F(1) is coupled via a rotary mechanism of the central stalk subunits to proton translocation. Its function is as follows. Component of the F(0) channel, it forms part of the peripheral stalk, linking F(1) to F(0). The protein is ATP synthase subunit b of Campylobacter concisus (strain 13826).